A 201-amino-acid polypeptide reads, in one-letter code: Cytochrome c oxidase assembly protein CtaG (201 aa).

The Cytoplasmic portion of the chain corresponds to 1 to 12 (MTDQGENEKKQR). The helical; Signal-anchor for type II membrane protein transmembrane segment at 13–35 (RSNATIAVACLSFFVCMIGAAYA) threads the bilayer. Residues 36–201 (SVPLYRIFCQ…KAVGSTRNGG (166 aa)) lie on the Periplasmic side of the membrane.

It belongs to the COX11/CtaG family.

It is found in the cell inner membrane. Functionally, exerts its effect at some terminal stage of cytochrome c oxidase synthesis, probably by being involved in the insertion of the copper B into subunit I. This Brucella suis biovar 1 (strain 1330) protein is Cytochrome c oxidase assembly protein CtaG.